We begin with the raw amino-acid sequence, 341 residues long: Probable UDP-glucuronate 4-epimerase (341 aa).

Tyrosine 152 functions as the Proton acceptor in the catalytic mechanism.

Belongs to the NAD(P)-dependent epimerase/dehydratase family. NAD(+) is required as a cofactor.

The catalysed reaction is UDP-alpha-D-glucuronate = UDP-alpha-D-galacturonate. The polypeptide is Probable UDP-glucuronate 4-epimerase (Rhizobium meliloti (strain 1021) (Ensifer meliloti)).